The chain runs to 475 residues: DnaB-like replicative helicase (475 aa).

The SF4 helicase domain occupies 165–444 (YMNKARKVPF…STPTEVNEVA (280 aa)). Residue 197–204 (AGVNVGKS) participates in ATP binding. The interval 456–475 (YQRNESTRAQLDALANELKF) is interaction with the helicase assembly factor.

It belongs to the helicase family. DnaB subfamily. Homohexamer. The homohexamer is a trimer of asymmetric dimers. Interacts with the DNA primase; this interaction forms the active primosome complex, which is composed of 6 helicase and 1 primase subunits and expresses full helicase and primase activities. Interacts (via C-terminus) with the helicase assembly factor; this interaction brings about the rapid assembly of the helicase onto ssDNA. Part of the replicase complex that includes the DNA polymerase, the polymerase clamp, the clamp loader complex, the single-stranded DNA binding protein, the primase, the DnaB-like replicative helicase and the helicase assembly factor.

Its function is as follows. ATP-dependent DNA helicase essential for viral DNA replication and recombination. The helicase moves 5' -&gt; 3' on the lagging strand template, unwinding the DNA duplex ahead of the leading strand polymerase at the replication fork and generating ssDNA for both leading and lagging strand synthesis. Interaction with the primase allows the primase to initiate lagging strand synthesis and fully activates the helicase. Loaded by the helicase assembly factor on replication forks that begin at discrete replication origin sequences, as well as on forks that are created during recombination. The protein is DnaB-like replicative helicase of Escherichia coli (Bacteriophage T4).